The chain runs to 218 residues: Ribose-5-phosphate isomerase A (218 aa).

Substrate contacts are provided by residues 27-30 (TGST), 80-83 (DGAD), and 93-96 (KGGG). The Proton acceptor role is filled by glutamate 102. Lysine 120 contributes to the substrate binding site.

This sequence belongs to the ribose 5-phosphate isomerase family. Homodimer.

It catalyses the reaction aldehydo-D-ribose 5-phosphate = D-ribulose 5-phosphate. It functions in the pathway carbohydrate degradation; pentose phosphate pathway; D-ribose 5-phosphate from D-ribulose 5-phosphate (non-oxidative stage): step 1/1. Functionally, catalyzes the reversible conversion of ribose-5-phosphate to ribulose 5-phosphate. The chain is Ribose-5-phosphate isomerase A from Thiobacillus denitrificans (strain ATCC 25259 / T1).